A 181-amino-acid chain; its full sequence is ATP synthase subunit delta (181 aa).

It belongs to the ATPase delta chain family. In terms of assembly, F-type ATPases have 2 components, F(1) - the catalytic core - and F(0) - the membrane proton channel. F(1) has five subunits: alpha(3), beta(3), gamma(1), delta(1), epsilon(1). F(0) has three main subunits: a(1), b(2) and c(10-14). The alpha and beta chains form an alternating ring which encloses part of the gamma chain. F(1) is attached to F(0) by a central stalk formed by the gamma and epsilon chains, while a peripheral stalk is formed by the delta and b chains.

It is found in the cell membrane. Functionally, f(1)F(0) ATP synthase produces ATP from ADP in the presence of a proton or sodium gradient. F-type ATPases consist of two structural domains, F(1) containing the extramembraneous catalytic core and F(0) containing the membrane proton channel, linked together by a central stalk and a peripheral stalk. During catalysis, ATP synthesis in the catalytic domain of F(1) is coupled via a rotary mechanism of the central stalk subunits to proton translocation. This protein is part of the stalk that links CF(0) to CF(1). It either transmits conformational changes from CF(0) to CF(1) or is implicated in proton conduction. This is ATP synthase subunit delta from Lactiplantibacillus plantarum (strain ATCC BAA-793 / NCIMB 8826 / WCFS1) (Lactobacillus plantarum).